The primary structure comprises 241 residues: 1-(5-phosphoribosyl)-5-[(5-phosphoribosylamino)methylideneamino] imidazole-4-carboxamide isomerase (241 aa).

Aspartate 8 functions as the Proton acceptor in the catalytic mechanism. Residue aspartate 129 is the Proton donor of the active site.

It belongs to the HisA/HisF family.

Its subcellular location is the cytoplasm. It catalyses the reaction 1-(5-phospho-beta-D-ribosyl)-5-[(5-phospho-beta-D-ribosylamino)methylideneamino]imidazole-4-carboxamide = 5-[(5-phospho-1-deoxy-D-ribulos-1-ylimino)methylamino]-1-(5-phospho-beta-D-ribosyl)imidazole-4-carboxamide. It functions in the pathway amino-acid biosynthesis; L-histidine biosynthesis; L-histidine from 5-phospho-alpha-D-ribose 1-diphosphate: step 4/9. This is 1-(5-phosphoribosyl)-5-[(5-phosphoribosylamino)methylideneamino] imidazole-4-carboxamide isomerase from Caulobacter sp. (strain K31).